A 485-amino-acid chain; its full sequence is Glutamyl-tRNA(Gln) amidotransferase subunit A (485 aa).

Catalysis depends on charge relay system residues Lys79 and Ser154. Catalysis depends on Ser178, which acts as the Acyl-ester intermediate.

This sequence belongs to the amidase family. GatA subfamily. In terms of assembly, heterotrimer of A, B and C subunits.

The enzyme catalyses L-glutamyl-tRNA(Gln) + L-glutamine + ATP + H2O = L-glutaminyl-tRNA(Gln) + L-glutamate + ADP + phosphate + H(+). Its function is as follows. Allows the formation of correctly charged Gln-tRNA(Gln) through the transamidation of misacylated Glu-tRNA(Gln) in organisms which lack glutaminyl-tRNA synthetase. The reaction takes place in the presence of glutamine and ATP through an activated gamma-phospho-Glu-tRNA(Gln). This is Glutamyl-tRNA(Gln) amidotransferase subunit A from Staphylococcus epidermidis (strain ATCC 12228 / FDA PCI 1200).